The primary structure comprises 567 residues: Dihydrolipoyl dehydrogenase 2, chloroplastic (567 aa).

A chloroplast-targeting transit peptide spans 1–67; sequence MQSVLSLSFS…HIQSRRIEVS (67 aa). FAD contacts are provided by residues 114–122, Lys-131, Gly-197, and 221–223; these read EGDVVGGTC and TGS. Cysteines 122 and 127 form a disulfide. Residues 258–265, Glu-281, and Gly-354 contribute to the NAD(+) site; that span reads GSGYIGLE. Residues Asp-400 and 406–409 contribute to the FAD site; that span reads MLAH. His-536 serves as the catalytic Proton acceptor.

It belongs to the class-I pyridine nucleotide-disulfide oxidoreductase family. In terms of assembly, homodimer. Part of the plastidial pyruvate dehydrogenase complex (PDC) containing multiple copies of three enzymatic components: pyruvate dehydrogenase (E1), dihydrolipoamide acetyltransferase (E2) and lipoamide dehydrogenase (E3). FAD serves as cofactor. Expressed mainly in flower buds and immature siliques, and to a lesser extent in flowers.

It localises to the plastid. The protein localises to the chloroplast stroma. The enzyme catalyses N(6)-[(R)-dihydrolipoyl]-L-lysyl-[protein] + NAD(+) = N(6)-[(R)-lipoyl]-L-lysyl-[protein] + NADH + H(+). Lipoamide dehydrogenase is a component of the plastidial pyruvate dehydrogenase complex (PDC). The chain is Dihydrolipoyl dehydrogenase 2, chloroplastic (LPD2) from Arabidopsis thaliana (Mouse-ear cress).